The chain runs to 69 residues: Conotoxin Fr3.1 (69 aa).

The signal sequence occupies residues 1–20; sequence MLKTGVLLLIFLVLFPLATL. The propeptide occupies 21-51; that stretch reads QDADQPVERNVENKQDLNLDKRRGMKLLAQR. Residue glutamine 52 is modified to Pyrrolidone carboxylic acid. Glutamate 54 carries the post-translational modification 4-carboxyglutamate. Proline 58 bears the 4-hydroxyproline mark.

The protein belongs to the conotoxin M superfamily. In terms of tissue distribution, expressed by the venom duct.

It is found in the secreted. Probable toxin. The sequence is that of Conotoxin Fr3.1 from Conus frigidus (Frigid cone).